A 433-amino-acid chain; its full sequence is MRVVILGSGVVGVASAWYLAQAGHEVTVIDRQPAPALETSAGNAGQISPGYAAPWAAPGVPLKAVKWMFQRHAPLAIRLDGSRYQLEWMWQMLRNCDMRHYQQNKSRMVRIAEYSRDCLKALREQTGIAYEGRQGGTLQLFRTAQQFESAAKDIAVLREAGVPYQLLEAAQLIEAEPALAASQHKLSGGLRLPNDETGDCQLFTQRLAEMAMAAGVHFRFNTPVDALLQDANQICGVQCGSERVTADAYVVALGSFSTELLNHIVKIPVYPLKGYSLTIPITDEKAAPLSTVLDETYKVAITRFDNRIRVGGMAEIVGFNTQLLPARRKTLEMVVRDLYPHGGDIGRATFWSGLRPMTPDGTPVVGRTPLKNLYLNTGHGTLGWTMACGSGQLLADIISGRTPAISADDLSVIRYLPGFYPAPVRALHGVNVG.

Residue 3-17 coordinates FAD; the sequence is VVILGSGVVGVASAW.

The protein belongs to the DadA oxidoreductase family. The cofactor is FAD.

The catalysed reaction is a D-alpha-amino acid + A + H2O = a 2-oxocarboxylate + AH2 + NH4(+). The protein operates within amino-acid degradation; D-alanine degradation; NH(3) and pyruvate from D-alanine: step 1/1. In terms of biological role, oxidative deamination of D-amino acids. This chain is D-amino acid dehydrogenase, found in Erwinia tasmaniensis (strain DSM 17950 / CFBP 7177 / CIP 109463 / NCPPB 4357 / Et1/99).